We begin with the raw amino-acid sequence, 394 residues long: Fructose-bisphosphate aldolase, chloroplastic (394 aa).

The N-terminal 46 residues, Met-1 to Ala-46, are a transit peptide targeting the chloroplast. Positions 93 and 183 each coordinate substrate. Glu-223 (proton acceptor) is an active-site residue. Residue Lys-265 is the Schiff-base intermediate with dihydroxyacetone-P of the active site.

It belongs to the class I fructose-bisphosphate aldolase family.

It localises to the plastid. It is found in the chloroplast. The catalysed reaction is beta-D-fructose 1,6-bisphosphate = D-glyceraldehyde 3-phosphate + dihydroxyacetone phosphate. It functions in the pathway carbohydrate degradation; glycolysis; D-glyceraldehyde 3-phosphate and glycerone phosphate from D-glucose: step 4/4. The polypeptide is Fructose-bisphosphate aldolase, chloroplastic (Spinacia oleracea (Spinach)).